We begin with the raw amino-acid sequence, 204 residues long: MCKDRQHTSRPQIQHNRVKTPLAKLTSTIAKGPLHRRSTMGRHRAAYHRCYRRSSKESSAIIPCKTRTYSTVSETAWRQTNPSPNELLLSMLPPVPRRPRGGCRPLHAPLLNKMPQTFPAASERPMPSRRLSKATQNVQTRPSERPAPCHRRPGPRGPGGRDPPEACHPWSLGPELGLLAPSEVQFDCLEASRTWNTFIGAYTK.

The disordered stretch occupies residues Phe118 to Pro169.

This is an uncharacterized protein from Encephalitozoon cuniculi (strain GB-M1) (Microsporidian parasite).